A 145-amino-acid chain; its full sequence is Bacilliredoxin SERP1006 (145 aa).

The protein belongs to the bacilliredoxin family.

This chain is Bacilliredoxin SERP1006, found in Staphylococcus epidermidis (strain ATCC 35984 / DSM 28319 / BCRC 17069 / CCUG 31568 / BM 3577 / RP62A).